Here is a 345-residue protein sequence, read N- to C-terminus: Protein-glutamate methylesterase/protein-glutamine glutaminase (345 aa).

In terms of domain architecture, Response regulatory spans 5–123 (KVIVVDDSVL…ELSKMKDDLI (119 aa)). A 4-aspartylphosphate modification is found at D56. The CheB-type methylesterase domain occupies 153-343 (SSDSIEAVVI…DEIIKIVRGL (191 aa)). Active-site residues include S165, H192, and D285.

It belongs to the CheB family. In terms of processing, phosphorylated by CheA. Phosphorylation of the N-terminal regulatory domain activates the methylesterase activity.

The protein localises to the cytoplasm. It carries out the reaction [protein]-L-glutamate 5-O-methyl ester + H2O = L-glutamyl-[protein] + methanol + H(+). The catalysed reaction is L-glutaminyl-[protein] + H2O = L-glutamyl-[protein] + NH4(+). Functionally, involved in chemotaxis. Part of a chemotaxis signal transduction system that modulates chemotaxis in response to various stimuli. Catalyzes the demethylation of specific methylglutamate residues introduced into the chemoreceptors (methyl-accepting chemotaxis proteins or MCP) by CheR. Also mediates the irreversible deamidation of specific glutamine residues to glutamic acid. The polypeptide is Protein-glutamate methylesterase/protein-glutamine glutaminase (Clostridium acetobutylicum (strain ATCC 824 / DSM 792 / JCM 1419 / IAM 19013 / LMG 5710 / NBRC 13948 / NRRL B-527 / VKM B-1787 / 2291 / W)).